Reading from the N-terminus, the 130-residue chain is uncharacterized protein (130 aa).

This is an uncharacterized protein from Methanocaldococcus jannaschii (strain ATCC 43067 / DSM 2661 / JAL-1 / JCM 10045 / NBRC 100440) (Methanococcus jannaschii).